The following is a 493-amino-acid chain: MSLLKMEYNLYAELKKITCGQSLSLFNEDGDFVEVEPGSLFKFLIPKGFYSSPSVKTSLVFETLTTTDNKITSINPTNAPKLYPLQHKVVSEVVSNMRKMIKLKRPLYITLHLACGFGKTITTCYLMATHGRKTVICVPNKMLIHQWKTQVEAVGLEHKISIDGVSSLLKELKTQSPDVLIVVSRHLTNDAFCKYINKHYDLFILDESHTYNLMNNTAVTRFLAYYPPMMCYFLTATPRPSNRIYCNSIINIAKLSDLKKTIYAVDSFFEPYSTDNIRHMIKRLDGPSNKYHIYTEKLLSVDEPRNQLILNTLVEEFKSGTINRVLVITKLREHMVLFYKRLLDLFGPEVVFIGDAQNRRTPDMVKSIKELNRFIFVSTLFYSGTGLDIPSLDSLFICSAVINNMQIEQLLGRVCRETELLDRTVYVFPNTSVKEIKYMIGNFVQRIISLSVDKLGFKQESYRKHQESDPTSVCTASSREERVLNRIFNSQNR.

One can recognise a Helicase ATP-binding domain in the interval 100 to 256 (MIKLKRPLYI…NSIINIAKLS (157 aa)). Residue 113–120 (LACGFGKT) participates in ATP binding. The short motif at 206 to 209 (DESH) is the DESH box element.

This sequence belongs to the helicase family. Poxviruses subfamily. Interacts with OPG087. Might be part of a transcription complex composed at least of OPG087, OPG110, and OPG145.

It is found in the virion. Functionally, DNA helicase which seems to act as a postreplicative transcription termination factor. Involved in ATP-dependent release of nascent RNA. Forms a stable complex with single-stranded DNA, and to a lesser extent RNA. The polypeptide is Transcript termination protein OPG145 (OPG145) (Variola virus (isolate Human/India/Ind3/1967) (VARV)).